Reading from the N-terminus, the 445-residue chain is Protein cereblon (445 aa).

Residues M1–F50 form a disordered region. Acidic residues predominate over residues E23 to D36. A Lon N-terminal domain is found at I82–T321. The 109-residue stretch at C320 to I428 folds into the CULT domain. Zn(2+)-binding residues include C325 and C328. (S)-thalidomide contacts are provided by H380, W382, and W388. 2 residues coordinate Zn(2+): C393 and C396.

The protein belongs to the CRBN family. In terms of assembly, component of a DCX (DDB1-CUL4-X-box) protein ligase complex. Interacts directly with DDB1.

It is found in the cytoplasm. It localises to the nucleus. The protein operates within protein modification; protein ubiquitination. In terms of biological role, substrate recognition component of a DCX (DDB1-CUL4-X-box) E3 protein ligase complex that mediates the ubiquitination and subsequent proteasomal degradation of target proteins, such as MEIS2. Normal degradation of key regulatory proteins is required for normal limb outgrowth and expression of the fibroblast growth factor FGF8. Maintains presynaptic glutamate release and consequently cognitive functions, such as memory and learning, by negatively regulating large-conductance calcium-activated potassium (BK) channels in excitatory neurons. Likely to function by regulating the assembly and neuronal surface expression of BK channels via its interaction with KCNT1. May also be involved in regulating anxiety-like behaviors via a BK channel-independent mechanism. This chain is Protein cereblon (CRBN), found in Gallus gallus (Chicken).